The primary structure comprises 510 residues: MNVVPILLLILDGYGLAPDSTGNAAKLAFTPNIDRMLAMSGGTQIHASGRAVGLPDGYMGNSEVGHLNIGAGRVVYQQMTRIDVAIENKELDSNPILLDLFTKVKSSNGRLHLLGLLSNGGVHSHIRHLEALLSIAKEHNIQVILHPFMDGRDTGPKDGLKFMKEIVSFLTSTSSGVIGSFCGRFYAMDRDKRWERIKLAWDAIVHGVGLHVEDSVKALEQAYASGETDEFIKPRVMGNSSVNCVQDNDAVLFFNFRADRARELVSAFILPDFNGFDRGRVPHLSGIATMTMYDKEFNIPVLFNHENITKTLGEVVSALGLLQLRIAETEKYAHVTYFFSGGREEVFTGEERILVQSPRDVATYDLKPEMSVMEVTDRLLTAWNSKKFSLIVCNLANPDMVGHTGNIKASISALEAVDNCVGRIEKAVAEQHGCFILTADHGNVEEMLDKSGQPQTAHSCNPVPLIAIYDGKPLNLKESGKLGDIAPTILSIWDVSIPNEMTGNNLLSSE.

Residues Asp12 and Ser62 each coordinate Mn(2+). Residue Ser62 is the Phosphoserine intermediate of the active site. Residues His123, Arg152–Asp153, Arg184, Arg190, Arg257–Arg260, and Lys331 each bind substrate. Asp399, His403, Asp440, His441, and His458 together coordinate Mn(2+).

It belongs to the BPG-independent phosphoglycerate mutase family. Monomer. Mn(2+) is required as a cofactor.

The enzyme catalyses (2R)-2-phosphoglycerate = (2R)-3-phosphoglycerate. It participates in carbohydrate degradation; glycolysis; pyruvate from D-glyceraldehyde 3-phosphate: step 3/5. Catalyzes the interconversion of 2-phosphoglycerate and 3-phosphoglycerate. This is 2,3-bisphosphoglycerate-independent phosphoglycerate mutase from Lawsonia intracellularis (strain PHE/MN1-00).